Reading from the N-terminus, the 139-residue chain is Protein LTO1 homolog (139 aa).

The protein belongs to the LTO1 family.

This is Protein LTO1 homolog from Dictyostelium discoideum (Social amoeba).